The chain runs to 466 residues: Oxysterol-binding protein 4 (466 aa).

Over residues 1-12 (MEIGTSSTTNNI) the composition is skewed to polar residues. The tract at residues 1–67 (MEIGTSSTTN…STSPPSPPIE (67 aa)) is disordered. The segment covering 24–45 (NNNNHNNNSSNNSSNNNSISSS) has biased composition (low complexity). Positions 46-60 (PTDSSQLMNGEQSTS) are enriched in polar residues.

This sequence belongs to the OSBP family.

The sequence is that of Oxysterol-binding protein 4 (osbD) from Dictyostelium discoideum (Social amoeba).